Here is a 318-residue protein sequence, read N- to C-terminus: Probable RNA methyltransferase At5g51130 (318 aa).

Disordered stretches follow at residues 1–61 (MGRD…NQEV) and 146–184 (NSTK…DSAE). Basic and acidic residues predominate over residues 16–34 (RSNENEKSVEKVVANEEKV). Residues 37-52 (QQKQKQQQGQQGNCNQ) are compositionally biased toward low complexity. The region spanning 82-318 (DPRLKVLKKE…FDRQILAFQK (237 aa)) is the Bin3-type SAM domain.

It belongs to the methyltransferase superfamily.

In terms of biological role, probable RNA methyltransferase. The sequence is that of Probable RNA methyltransferase At5g51130 from Arabidopsis thaliana (Mouse-ear cress).